The following is a 956-amino-acid chain: Probable hypoxanthine oxidase XdhD (956 aa).

Residues glutamine 414, phenylalanine 445, and alanine 727 each contribute to the Mo-molybdopterin site.

It belongs to the xanthine dehydrogenase family. It depends on [2Fe-2S] cluster as a cofactor. Requires Mo-molybdopterin as cofactor.

Functionally, probably has no xanthine dehydrogenase activity; however deletion results in increased adenine sensitivity, suggesting that this protein contributes to the conversion of adenine to guanine nucleotides during purine salvage. This is Probable hypoxanthine oxidase XdhD (xdhD) from Escherichia coli (strain K12).